A 152-amino-acid polypeptide reads, in one-letter code: D-aminoacyl-tRNA deacylase (152 aa).

Positions 142–143 (GP) match the Gly-cisPro motif, important for rejection of L-amino acids motif.

This sequence belongs to the DTD family. Homodimer.

The protein localises to the cytoplasm. It carries out the reaction glycyl-tRNA(Ala) + H2O = tRNA(Ala) + glycine + H(+). The catalysed reaction is a D-aminoacyl-tRNA + H2O = a tRNA + a D-alpha-amino acid + H(+). An aminoacyl-tRNA editing enzyme that deacylates mischarged D-aminoacyl-tRNAs. Also deacylates mischarged glycyl-tRNA(Ala), protecting cells against glycine mischarging by AlaRS. Acts via tRNA-based rather than protein-based catalysis; rejects L-amino acids rather than detecting D-amino acids in the active site. By recycling D-aminoacyl-tRNA to D-amino acids and free tRNA molecules, this enzyme counteracts the toxicity associated with the formation of D-aminoacyl-tRNA entities in vivo and helps enforce protein L-homochirality. In Burkholderia vietnamiensis (strain G4 / LMG 22486) (Burkholderia cepacia (strain R1808)), this protein is D-aminoacyl-tRNA deacylase.